The primary structure comprises 363 residues: Aminomethyltransferase (363 aa).

This sequence belongs to the GcvT family. In terms of assembly, the glycine cleavage system is composed of four proteins: P, T, L and H.

The catalysed reaction is N(6)-[(R)-S(8)-aminomethyldihydrolipoyl]-L-lysyl-[protein] + (6S)-5,6,7,8-tetrahydrofolate = N(6)-[(R)-dihydrolipoyl]-L-lysyl-[protein] + (6R)-5,10-methylene-5,6,7,8-tetrahydrofolate + NH4(+). The glycine cleavage system catalyzes the degradation of glycine. The chain is Aminomethyltransferase from Staphylococcus epidermidis (strain ATCC 35984 / DSM 28319 / BCRC 17069 / CCUG 31568 / BM 3577 / RP62A).